The primary structure comprises 418 residues: Arginine deiminase (418 aa).

C406 (amidino-cysteine intermediate) is an active-site residue.

The protein belongs to the arginine deiminase family.

It is found in the cytoplasm. The catalysed reaction is L-arginine + H2O = L-citrulline + NH4(+). It functions in the pathway amino-acid degradation; L-arginine degradation via ADI pathway; carbamoyl phosphate from L-arginine: step 1/2. This chain is Arginine deiminase, found in Lentilactobacillus hilgardii (Lactobacillus hilgardii).